We begin with the raw amino-acid sequence, 1036 residues long: Zinc finger protein 532 (1036 aa).

4 disordered regions span residues 26–92, 106–206, 220–265, and 281–362; these read PKAA…LHNG, GAKS…EAES, RKAE…PSSK, and AASD…KVRI. Residues 32–52 are compositionally biased toward basic and acidic residues; that stretch reads SGHDDHESHIKQNAHVDDDSH. Phosphoserine occurs at positions 130, 133, and 134. Acidic residues predominate over residues 136-151; sequence EEFEDDEKIEVDDPPD. Position 175 is an N6-acetyllysine (Lys-175). Residues 182–193 are compositionally biased toward polar residues; the sequence is ENSSKTGVSTSG. 2 stretches are compositionally biased toward basic and acidic residues: residues 194-205 and 220-249; these read HTDKNKVKREAE and RKAE…EKSD. Over residues 253 to 265 the composition is skewed to low complexity; sequence AAAASSKTKPSSK. Basic and acidic residues predominate over residues 302 to 314; the sequence is EVNDSPKAADKSP. Phosphoserine is present on residues Ser-306 and Ser-313. Residues 336 to 353 are compositionally biased toward low complexity; that stretch reads SVSSENSSKGSPSSPVGS. Ser-433 is modified (phosphoserine). Residues Lys-458 and Lys-515 each participate in a glycyl lysine isopeptide (Lys-Gly) (interchain with G-Cter in SUMO2) cross-link. The segment at 615–634 adopts a C2H2-type 1; degenerate zinc-finger fold; that stretch reads YKCLECGDAFALEKSLSQHY. The C2H2-type 2; degenerate zinc-finger motif lies at 751-775; it reads LKCLECNEVFQDEPSLATHFQHAAD. The segment at 784–807 adopts a C2H2-type 3 zinc-finger fold; that stretch reads HPCRQCDKSFSSSHSLCRHNRIKH. The C2H2-type 4; degenerate zinc finger occupies 814 to 840; the sequence is YACSHCPDSRRTFTKRLMLERHIQLMH. Residues 847 to 877 form a disordered region; that stretch reads VKELSDDAGDVTNDEEEEAEIKEDAKVPSPK. The span at 852 to 867 shows a compositional bias: acidic residues; it reads DDAGDVTNDEEEEAEI. Over residues 868–877 the composition is skewed to basic and acidic residues; the sequence is KEDAKVPSPK. Phosphoserine is present on Ser-875. Residues Lys-879 and Lys-902 each participate in a glycyl lysine isopeptide (Lys-Gly) (interchain with G-Cter in SUMO2) cross-link. 2 consecutive C2H2-type zinc fingers follow at residues 938–961 and 999–1021; these read HQCR…FIVH and RKCK…MRTH. The interval 966–1000 is disordered; the sequence is PQPVSKQNGAGEDSQQENKPSPEDEAAEGAASDRK.

This sequence belongs to the krueppel C2H2-type zinc-finger protein family.

Its subcellular location is the nucleus. Its function is as follows. May be involved in transcriptional regulation. The chain is Zinc finger protein 532 (Znf532) from Mus musculus (Mouse).